Consider the following 2430-residue polypeptide: Protein TASOR 2 (2430 aa).

Residues serine 19, serine 219, and serine 384 each carry the phosphoserine modification. Disordered regions lie at residues 416-488 and 577-648; these read LDRK…GETA and RGTS…SQSS. Serine 685 is subject to Phosphoserine. The disordered stretch occupies residues 704-727; the sequence is LLLQQKPPDDPVVKPKDRPPSARV. A compositionally biased stretch (basic and acidic residues) spans 710-723; the sequence is PPDDPVVKPKDRPP. Serine 1025, serine 1087, and serine 1172 each carry phosphoserine. The disordered stretch occupies residues 1331–1360; the sequence is LTESREVSSADNVSVYPSVSEEPVENKERK. Serine 1541 bears the Phosphoserine mark. The disordered stretch occupies residues 1700-1727; the sequence is EAELHKETTGPGTAGPQSNTTSSLKGER. A compositionally biased stretch (polar residues) spans 1714–1723; that stretch reads GPQSNTTSSL. At serine 1848 the chain carries Phosphoserine. Lysine 2007 is covalently cross-linked (Glycyl lysine isopeptide (Lys-Gly) (interchain with G-Cter in SUMO2)). Residues serine 2009, serine 2037, serine 2062, and serine 2066 each carry the phosphoserine modification. The interval 2046–2069 is disordered; sequence SDPRPQGQPRRGYTASSLDSSSSW.

It belongs to the TASOR family.

The sequence is that of Protein TASOR 2 from Homo sapiens (Human).